We begin with the raw amino-acid sequence, 633 residues long: Phospholipid--sterol O-acyltransferase (633 aa).

The Cytoplasmic portion of the chain corresponds to 1–6 (MGANSK). A helical; Signal-anchor for type II membrane protein membrane pass occupies residues 7-29 (SVTASFTVIAVFFLICGGRTAVE). The Lumenal portion of the chain corresponds to 30–633 (DETEFHGDYS…TSANMLLQYI (604 aa)). Catalysis depends on Ser195, which acts as the Acyl-ester intermediate. Residues Asp461 and His505 each act as charge relay system in the active site.

Belongs to the AB hydrolase superfamily. Lipase family.

It is found in the microsome membrane. Its function is as follows. Involved in lipid catabolism. Essential for sterol esters biosynthesis in leaves and seeds, but not in flowers. Plays a role in controlling the free sterol content of leaves. Catalyzes the transacylation of acyl groups from phospholipids to a variety of different sterols. Prefers phosphatidylethanolamine over phosphatidylcholine as an acyl donor. Not active toward neutral lipids. Highly specific for position sn-2, which in plant lipids is essentially devoid of saturated acyl groups. Broad sterol specificity (cholesterol &gt; campesterol &gt; sitosterol &gt; stigmasterol), but no activity with lupeol or beta-amyrin. The protein is Phospholipid--sterol O-acyltransferase (PSAT) of Arabidopsis thaliana (Mouse-ear cress).